We begin with the raw amino-acid sequence, 363 residues long: Sorting nexin-21 (363 aa).

A compositionally biased stretch (basic residues) spans 1 to 11 (MASRLLHRLRH). Residues 1-99 (MASRLLHRLR…PPPDGQRSSQ (99 aa)) are disordered. A compositionally biased stretch (low complexity) spans 12 to 28 (ALASDGPGEAAAGPEAE). Positions 46–56 (SRLSGTLSFTS) are enriched in polar residues. Acidic residues predominate over residues 57–71 (AEDDPDDEDEDDEAG). Positions 119-236 (QRLLFEVTSA…DFFVLPELRR (118 aa)) constitute a PX domain. The a 1,2-diacyl-sn-glycero-3-phospho-(1D-myo-inositol-3-phosphate) site is built by arginine 161, serine 163, lysine 188, and arginine 202.

Belongs to the sorting nexin family. As to quaternary structure, monomer.

It localises to the cytoplasmic vesicle membrane. The protein localises to the early endosome membrane. Its function is as follows. Binds to membranes enriched in phosphatidylinositol 3-phosphate (PtdIns(P3)) and phosphatidylinositol 4,5-bisphosphate. May be involved in several stages of intracellular trafficking. In Mus musculus (Mouse), this protein is Sorting nexin-21.